A 784-amino-acid chain; its full sequence is DNA repair and recombination protein RAD54-like (784 aa).

The interval 1–50 is disordered; sequence MRRSLAPSQRGPLRPESRHSFTPPLLKKNKRSCQQELEREQELDRKRQSA. Positions 2-9 are required for chromatin remodeling, strand pairing activities and coupling of ATPase activity; that stretch reads RRSLAPSQ. The residue at position 20 (serine 20) is a Phosphoserine. A Phosphothreonine modification is found at threonine 22. A compositionally biased stretch (basic and acidic residues) spans 36–47; the sequence is ELEREQELDRKR. The Helicase ATP-binding domain maps to 172–346; the sequence is EGKRGNFNGC…YSLVNFVNPE (175 aa). Residue 185–192 coordinates ATP; sequence DEMGLGKT. The DEGH box motif lies at 297 to 300; sequence DEGH. The Helicase C-terminal domain occupies 503–660; that stretch reads LLDFMLAAIR…NNESAEKHFT (158 aa). Residues 747-756 are compositionally biased toward low complexity; sequence VASAEEAASE. The interval 747-784 is disordered; sequence VASAEEAASEQPEEKPDRRKRPSTPLSDDSADEDFLGF. Residues 775–784 show a composition bias toward acidic residues; the sequence is DSADEDFLGF.

The protein belongs to the SNF2/RAD54 helicase family. Interacts (via N-terminus) with spn-A/Rad51.

It localises to the nucleus. Involved in mitotic DNA repair and meiotic recombination. Functions in the recombinational DNA repair pathway. Essential for interhomolog gene conversion (GC), but may have a less important role in intersister GC than spn-A/Rad51. In the presence of DNA, spn-A/Rad51 enhances the ATPase activity of okr/Rad54. This Drosophila erecta (Fruit fly) protein is DNA repair and recombination protein RAD54-like.